A 128-amino-acid chain; its full sequence is Large ribosomal subunit protein uL18 (128 aa).

It belongs to the universal ribosomal protein uL18 family. As to quaternary structure, part of the 50S ribosomal subunit; part of the 5S rRNA/L5/L18/L25 subcomplex. Contacts the 5S and 23S rRNAs.

In terms of biological role, this is one of the proteins that bind and probably mediate the attachment of the 5S RNA into the large ribosomal subunit, where it forms part of the central protuberance. The sequence is that of Large ribosomal subunit protein uL18 from Acidothermus cellulolyticus (strain ATCC 43068 / DSM 8971 / 11B).